The sequence spans 347 residues: Hyaluronidase conohyal-ad1 (347 aa).

A signal peptide spans 1-18; the sequence is MRAVVVVTGLVVVVVTTT. A propeptide spanning residues 19-33 is cleaved from the precursor; that stretch reads LSLQDHDVKSASSPL. The disordered stretch occupies residues 27–49; sequence KSASSPLSSSVDQGSSGDDCDEG. The segment covering 28–43 has biased composition (low complexity); it reads SASSPLSSSVDQGSSG. Residues Cys67 and Cys343 are joined by a disulfide bond. Glu150 acts as the Proton donor in catalysis.

The protein belongs to the glycosyl hydrolase 56 family. In terms of processing, contains 4 disulfide bonds. Is N-linked glycosylated at three positions. Expressed by the venom duct.

The protein resides in the secreted. It catalyses the reaction Random hydrolysis of (1-&gt;4)-linkages between N-acetyl-beta-D-glucosamine and D-glucuronate residues in hyaluronate.. Hyaluronidase catalyzes the hydrolysis of hyaluronic acid (HA), an anionic, nonsulfated glycosaminoglycan distributed widely throughout connective, epithelial, and neural tissues. In venom, they are known to enhance diffusion of the venom by degrading the extracellular matrix. This chain is Hyaluronidase conohyal-ad1, found in Conus adamsonii (Rhododendron cone).